A 294-amino-acid chain; its full sequence is Undecaprenyl-diphosphatase (294 aa).

6 helical membrane-spanning segments follow: residues 39–59 (PGAA…ILYF), 93–113 (ATLG…GFTL), 123–143 (NLWI…MVDA), 198–218 (SFLM…IKAV), 232–252 (PTLV…IGFL), and 268–288 (IGLA…AIDP).

Belongs to the UppP family.

It localises to the cell membrane. The catalysed reaction is di-trans,octa-cis-undecaprenyl diphosphate + H2O = di-trans,octa-cis-undecaprenyl phosphate + phosphate + H(+). Functionally, catalyzes the dephosphorylation of undecaprenyl diphosphate (UPP). Confers resistance to bacitracin. The protein is Undecaprenyl-diphosphatase of Bifidobacterium longum (strain DJO10A).